The chain runs to 189 residues: Interferon alpha-B (189 aa).

The N-terminal stretch at 1-23 (MAPAWSFLLALLLLSCNAICSLG) is a signal peptide. 2 disulfide bridges follow: C24-C122 and C52-C162.

The protein belongs to the alpha/beta interferon family.

It is found in the secreted. Functionally, produced by macrophages, IFN-alpha have antiviral activities. Interferon stimulates the production of two enzymes: a protein kinase and an oligoadenylate synthetase. This chain is Interferon alpha-B (IFNAB), found in Bos taurus (Bovine).